Consider the following 95-residue polypeptide: MSFKPLHDRIAIKPIENEEKTKGGIIIPDTAKEKPMQGEIVAVGNGVLNKNGEIYPLELKVGDKVLYGKWAGTEIEIKGEKLIVMKESDVFGIIN.

Belongs to the GroES chaperonin family. As to quaternary structure, heptamer of 7 subunits arranged in a ring. Interacts with the chaperonin GroEL.

Its subcellular location is the cytoplasm. Functionally, together with the chaperonin GroEL, plays an essential role in assisting protein folding. The GroEL-GroES system forms a nano-cage that allows encapsulation of the non-native substrate proteins and provides a physical environment optimized to promote and accelerate protein folding. GroES binds to the apical surface of the GroEL ring, thereby capping the opening of the GroEL channel. The polypeptide is Co-chaperonin GroES (Rickettsia typhi (strain ATCC VR-144 / Wilmington)).